We begin with the raw amino-acid sequence, 211 residues long: Glutathione S-transferase class-mu 28 kDa isozyme (211 aa).

A2 carries the N-acetylalanine modification. Residues 4 to 86 enclose the GST N-terminal domain; it reads EHIKVIYFDG…YMAKKHHMMG (83 aa). Residues Y10, 10–11, R16, 41–45, L53, 55–56, and 70–71 each bind glutathione; these read YF, WPKIK, AV, and ES. In terms of domain architecture, GST C-terminal spans 88–211; it reads TDEEYYSVEK…YLSNRPATPF (124 aa).

It belongs to the GST superfamily. Mu family. In terms of assembly, homodimer. In the adult, expressed in excretory epithelial cells but absent from the caecal epithelium and flame cells. Also expressed in the tegument and its extensions into the parenchyma. In the schistosomulum, expressed in the tegument and associated structures. Not expressed in digestive tract, reproductive organs or muscles (at protein level).

The enzyme catalyses RX + glutathione = an S-substituted glutathione + a halide anion + H(+). Functionally, conjugation of reduced glutathione to a wide number of exogenous and endogenous hydrophobic electrophiles. In terms of biological role, GST isoenzymes appear to play a central role in the parasite detoxification system. Other functions are also suspected including a role in increasing the solubility of haematin in the parasite gut. The chain is Glutathione S-transferase class-mu 28 kDa isozyme (GST28) from Schistosoma mansoni (Blood fluke).